The following is a 432-amino-acid chain: 3-chlorobenzoate-3,4-dioxygenase oxygenase subunit (432 aa).

The region spanning Trp27–Val133 is the Rieske domain. 4 residues coordinate [2Fe-2S] cluster: Cys69, His71, Cys88, and His91. Residues His180 and His185 each contribute to the Fe cation site.

This sequence belongs to the bacterial ring-hydroxylating dioxygenase alpha subunit family. This dioxygenase system consists of two proteins: an oxygenase and an oxygenase reductase. Requires [2Fe-2S] cluster as cofactor. The cofactor is Fe cation.

This chain is 3-chlorobenzoate-3,4-dioxygenase oxygenase subunit (cbaA), found in Comamonas testosteroni (Pseudomonas testosteroni).